Consider the following 343-residue polypeptide: F17g-G fimbrial adhesin (343 aa).

A signal peptide spans Met1 to Ala22. The segment at Ala23 to Val199 is receptor-binding lectin domain. A carbohydrate is bound by residues Ala65 to Asn66, Asp110 to Thr111, and Ser138 to Gly141. A disulfide bond links Cys75 and Cys132. A fimbrillin-binding domain region spans residues Thr200–Gln343. A disordered region spans residues Leu287–Gly307. Residues Asn298–Gly307 are compositionally biased toward polar residues.

The protein belongs to the fimbrial protein family.

The protein localises to the fimbrium. In terms of biological role, essential fimbrial adhesion factor that mediates binding to N-acetylglucosamine-containing receptors in the host intestinal microvilli, leading to colonization of the intestinal tissue, and diarrhea or septicemia. Also confers adhesiveness to laminin and basement membranes. May be involved in the initiation of polymerization of fimbrillin monomers during fimbrial filament biogenesis. The polypeptide is F17g-G fimbrial adhesin (f17gG) (Escherichia coli).